The chain runs to 425 residues: Glutamyl-tRNA reductase (425 aa).

Residues 49–52 (TCNR), Ser109, 114–116 (EGQ), and Gln120 each bind substrate. Cys50 serves as the catalytic Nucleophile. 189–194 (GAGETG) is a binding site for NADP(+).

The protein belongs to the glutamyl-tRNA reductase family. As to quaternary structure, homodimer.

The enzyme catalyses (S)-4-amino-5-oxopentanoate + tRNA(Glu) + NADP(+) = L-glutamyl-tRNA(Glu) + NADPH + H(+). It functions in the pathway porphyrin-containing compound metabolism; protoporphyrin-IX biosynthesis; 5-aminolevulinate from L-glutamyl-tRNA(Glu): step 1/2. The protein operates within porphyrin-containing compound metabolism; chlorophyll biosynthesis. Functionally, catalyzes the NADPH-dependent reduction of glutamyl-tRNA(Glu) to glutamate 1-semialdehyde (GSA). This is Glutamyl-tRNA reductase from Chlorobium phaeovibrioides (strain DSM 265 / 1930) (Prosthecochloris vibrioformis (strain DSM 265)).